A 145-amino-acid polypeptide reads, in one-letter code: Ribosomal RNA large subunit methyltransferase H (145 aa).

Residues Leu-64, Gly-93, and 112 to 117 (LSPLTF) each bind S-adenosyl-L-methionine.

Belongs to the RNA methyltransferase RlmH family. Homodimer.

The protein resides in the cytoplasm. The catalysed reaction is pseudouridine(1915) in 23S rRNA + S-adenosyl-L-methionine = N(3)-methylpseudouridine(1915) in 23S rRNA + S-adenosyl-L-homocysteine + H(+). Its function is as follows. Specifically methylates the pseudouridine at position 1915 (m3Psi1915) in 23S rRNA. This chain is Ribosomal RNA large subunit methyltransferase H, found in Prochlorococcus marinus (strain NATL2A).